The sequence spans 457 residues: UDP-glycosyltransferase 72C1 (457 aa).

UDP-alpha-D-glucose is bound by residues S272, 343 to 344 (WA), 361 to 369 (HCGWNSVLE), and 383 to 386 (YSEQ).

It belongs to the UDP-glycosyltransferase family.

In Arabidopsis thaliana (Mouse-ear cress), this protein is UDP-glycosyltransferase 72C1 (UGT72C1).